We begin with the raw amino-acid sequence, 194 residues long: NADH-quinone oxidoreductase subunit B 1 (194 aa).

Cys47, Cys48, Cys113, and Cys142 together coordinate [4Fe-4S] cluster.

It belongs to the complex I 20 kDa subunit family. As to quaternary structure, NDH-1 is composed of 14 different subunits. Subunits NuoB, C, D, E, F, and G constitute the peripheral sector of the complex. [4Fe-4S] cluster serves as cofactor.

It is found in the cell inner membrane. The catalysed reaction is a quinone + NADH + 5 H(+)(in) = a quinol + NAD(+) + 4 H(+)(out). In terms of biological role, NDH-1 shuttles electrons from NADH, via FMN and iron-sulfur (Fe-S) centers, to quinones in the respiratory chain. The immediate electron acceptor for the enzyme in this species is believed to be ubiquinone. Couples the redox reaction to proton translocation (for every two electrons transferred, four hydrogen ions are translocated across the cytoplasmic membrane), and thus conserves the redox energy in a proton gradient. The chain is NADH-quinone oxidoreductase subunit B 1 from Sorangium cellulosum (strain So ce56) (Polyangium cellulosum (strain So ce56)).